The sequence spans 915 residues: Alanine--tRNA ligase (915 aa).

Zn(2+)-binding residues include H605, H609, C709, and H713. The segment at 882–901 (GGGGDERLAQGGGRNPDGLT) is disordered.

This sequence belongs to the class-II aminoacyl-tRNA synthetase family. It depends on Zn(2+) as a cofactor.

Its subcellular location is the cytoplasm. It catalyses the reaction tRNA(Ala) + L-alanine + ATP = L-alanyl-tRNA(Ala) + AMP + diphosphate. In terms of biological role, catalyzes the attachment of alanine to tRNA(Ala) in a two-step reaction: alanine is first activated by ATP to form Ala-AMP and then transferred to the acceptor end of tRNA(Ala). Also edits incorrectly charged Ser-tRNA(Ala) and Gly-tRNA(Ala) via its editing domain. This chain is Alanine--tRNA ligase, found in Methanopyrus kandleri (strain AV19 / DSM 6324 / JCM 9639 / NBRC 100938).